The sequence spans 133 residues: Late embryogenesis abundant protein B19.3 (133 aa).

The disordered stretch occupies residues 1–133 (MASGQQERSE…IDESKFKTKS (133 aa)). Composition is skewed to basic and acidic residues over residues 7–19 (ERSE…REGE), 32–102 (EAQE…EMGR), and 113–133 (GGER…KTKS). Repeat copies occupy residues 24-43 (GGTG…GRSR), 44-63 (GGQT…MGHK), and 64-83 (GGET…MGHK). Residues 24-83 (GGTGGKTLEAQEHLAEGRSRGGQTRKDQLGEEGYREMGHKGGETRKEQLGEEGYREMGHK) are 3 X 20 AA tandem repeats.

This sequence belongs to the small hydrophilic plant seed protein family.

Its function is as follows. Lea proteins are late embryonic proteins abundant in higher plant seed embryos. This chain is Late embryogenesis abundant protein B19.3 (B19.3), found in Hordeum vulgare (Barley).